Reading from the N-terminus, the 212-residue chain is N-(5'-phosphoribosyl)anthranilate isomerase (212 aa).

Belongs to the TrpF family.

It catalyses the reaction N-(5-phospho-beta-D-ribosyl)anthranilate = 1-(2-carboxyphenylamino)-1-deoxy-D-ribulose 5-phosphate. It participates in amino-acid biosynthesis; L-tryptophan biosynthesis; L-tryptophan from chorismate: step 3/5. This Myxococcus xanthus (strain DK1622) protein is N-(5'-phosphoribosyl)anthranilate isomerase.